The sequence spans 316 residues: L-lactate dehydrogenase 3 (316 aa).

Positions 16, 37, 42, and 68 each coordinate NAD(+). A substrate-binding site is contributed by arginine 91. NAD(+) is bound by residues serine 104, 121 to 123, and threonine 146; that span reads ASN. 123-126 contacts substrate; it reads NPVD. 151-154 contacts substrate; the sequence is DSSR. 2 residues coordinate beta-D-fructose 1,6-bisphosphate: arginine 156 and histidine 171. Histidine 178 acts as the Proton acceptor in catalysis. Threonine 233 contacts substrate.

The protein belongs to the LDH/MDH superfamily. LDH family. In terms of assembly, homotetramer.

It localises to the cytoplasm. The catalysed reaction is (S)-lactate + NAD(+) = pyruvate + NADH + H(+). Its pathway is fermentation; pyruvate fermentation to lactate; (S)-lactate from pyruvate: step 1/1. Its activity is regulated as follows. Allosterically activated by fructose 1,6-bisphosphate (FBP). In terms of biological role, catalyzes the conversion of lactate to pyruvate. The chain is L-lactate dehydrogenase 3 from Bacillus anthracis.